A 465-amino-acid polypeptide reads, in one-letter code: Sorting nexin-8 (465 aa).

The span at 1 to 19 (MTGRAMDPLPAAAVGAAAE) shows a compositional bias: low complexity. The segment at 1 to 36 (MTGRAMDPLPAAAVGAAAEAEADEEADPPASDLPTP) is disordered. The PX domain maps to 73-181 (ARDTVQVELI…KLFLSFSGSD (109 aa)). Positions 109, 135, and 148 each coordinate a 1,2-diacyl-sn-glycero-3-phospho-(1D-myo-inositol-3-phosphate). Phosphothreonine is present on Thr452. Ser456 carries the post-translational modification Phosphoserine.

The protein belongs to the sorting nexin family.

The protein localises to the early endosome membrane. Its function is as follows. May be involved in several stages of intracellular trafficking. May play a role in intracellular protein transport from early endosomes to the trans-Golgi network. This is Sorting nexin-8 (SNX8) from Homo sapiens (Human).